Consider the following 481-residue polypeptide: CUGBP Elav-like family member 6 (481 aa).

Residues 1–12 (MAAAPGGSAQPA) are compositionally biased toward low complexity. Residues 1–34 (MAAAPGGSAQPAGPGPRLGFSTADSGVGMSGLNP) form a disordered region. RRM domains follow at residues 46-127 (IKLF…PAAS), 134-214 (RKLF…LADT), and 396-474 (CNLF…LKRP).

It belongs to the CELF/BRUNOL family. In terms of tissue distribution, expressed mainly in kidney, brain and testis and present in other tissues albeit at lower levels. Also expressed in fetal kidney.

The protein localises to the nucleus. Its subcellular location is the cytoplasm. Its function is as follows. RNA-binding protein implicated in the regulation of pre-mRNA alternative splicing. Mediates exon inclusion and/or exclusion in pre-mRNA that are subject to tissue-specific and developmentally regulated alternative splicing. Specifically activates exon 5 inclusion of TNNT2 in a muscle-specific splicing enhancer (MSE)-dependent manner. Promotes also exon exclusion of INSR pre-mRNA. This chain is CUGBP Elav-like family member 6 (CELF6), found in Homo sapiens (Human).